A 312-amino-acid polypeptide reads, in one-letter code: Protoheme IX farnesyltransferase (312 aa).

8 consecutive transmembrane segments (helical) span residues 31-51, 52-72, 119-139, 152-172, 179-199, 225-245, 247-267, and 288-308; these read VMSLVVFTALVGLLMAPGSFH, PVLAITAIICIAVGGGAAGAL, ILVNWIAAGLLAFTIFFYVVI, IVIGGAAGALPPVVAWASVTG, ILLFLIIFFWTPPHFWALALF, ILLYTVALVAVAAAPWPLGYF, VIYGVASLALGGWMLVLAVRV, and ILYLFALFAILLVEVVAAAVL.

Belongs to the UbiA prenyltransferase family. Protoheme IX farnesyltransferase subfamily.

The protein localises to the cell inner membrane. The catalysed reaction is heme b + (2E,6E)-farnesyl diphosphate + H2O = Fe(II)-heme o + diphosphate. It functions in the pathway porphyrin-containing compound metabolism; heme O biosynthesis; heme O from protoheme: step 1/1. Its function is as follows. Converts heme B (protoheme IX) to heme O by substitution of the vinyl group on carbon 2 of heme B porphyrin ring with a hydroxyethyl farnesyl side group. This chain is Protoheme IX farnesyltransferase, found in Rhodopseudomonas palustris (strain ATCC BAA-98 / CGA009).